Here is a 507-residue protein sequence, read N- to C-terminus: Desmethyl-deoxy-podophyllotoxin synthase (507 aa).

The helical transmembrane segment at 1 to 21 (MEFLSFPLSSALLIILLFMLV) threads the bilayer. Heme is bound at residue Cys440.

The protein belongs to the cytochrome P450 family. It depends on heme as a cofactor. Rhizome-specific expression.

It localises to the membrane. The catalysed reaction is (-)-deoxypodophyllotoxin + reduced [NADPH--hemoprotein reductase] + O2 = (-)-4'-desmethyl-deoxypodophyllotoxin + formaldehyde + oxidized [NADPH--hemoprotein reductase] + H2O + H(+). The protein operates within aromatic compound metabolism; phenylpropanoid biosynthesis. In terms of biological role, cytochrome P450 involved in the biosynthesis of etoposide, a chemotherapeutic compound of the topoisomerase inhibitor family. Catalyzes the conversion of deoxypodophyllotoxin to desmethyl-deoxypodophyllotoxin. In Sinopodophyllum hexandrum (Himalayan may apple), this protein is Desmethyl-deoxy-podophyllotoxin synthase.